A 260-amino-acid polypeptide reads, in one-letter code: Hydroxyethylthiazole kinase (260 aa).

Methionine 49 contacts substrate. 2 residues coordinate ATP: arginine 124 and threonine 170. Glycine 197 contacts substrate.

The protein belongs to the Thz kinase family. The cofactor is Mg(2+).

It carries out the reaction 5-(2-hydroxyethyl)-4-methylthiazole + ATP = 4-methyl-5-(2-phosphooxyethyl)-thiazole + ADP + H(+). Its pathway is cofactor biosynthesis; thiamine diphosphate biosynthesis; 4-methyl-5-(2-phosphoethyl)-thiazole from 5-(2-hydroxyethyl)-4-methylthiazole: step 1/1. Catalyzes the phosphorylation of the hydroxyl group of 4-methyl-5-beta-hydroxyethylthiazole (THZ). The sequence is that of Hydroxyethylthiazole kinase from Yersinia enterocolitica serotype O:8 / biotype 1B (strain NCTC 13174 / 8081).